A 475-amino-acid chain; its full sequence is UDP-N-acetylmuramate--L-alanine ligase (475 aa).

112-118 (GTHGKTT) lines the ATP pocket.

It belongs to the MurCDEF family.

It is found in the cytoplasm. The catalysed reaction is UDP-N-acetyl-alpha-D-muramate + L-alanine + ATP = UDP-N-acetyl-alpha-D-muramoyl-L-alanine + ADP + phosphate + H(+). It participates in cell wall biogenesis; peptidoglycan biosynthesis. In terms of biological role, cell wall formation. This Paracidovorax citrulli (strain AAC00-1) (Acidovorax citrulli) protein is UDP-N-acetylmuramate--L-alanine ligase.